The following is a 795-amino-acid chain: Protein Jade-3 (795 aa).

Residues 1–25 (MKRLRTPSSSDSSDNESPSTSFSSN) show a composition bias toward low complexity. Residues 1 to 41 (MKRLRTPSSSDSSDNESPSTSFSSNKYGSKPGTPASAQKKP) form a disordered region. The segment at 201–251 (DVICDVCRSPDSEEGNDMVFCDKCNICVHQACYGIVKVPDGNWLCRTCVLG) adopts a PHD-type 1 zinc-finger fold. A C2HC pre-PHD-type zinc finger spans residues 253 to 287 (TPQCLLCPKTGGAMKATRAGTKWAHVSCALWIPEV). The PHD-type 2 zinc-finger motif lies at 311–367 (LICSLCKLKTGACIQCSVKNCTIPFHVTCAFEHSLEMKTILDEGDEVKFKSYCLKHS). 3 disordered regions span residues 630–654 (HGQSSNGKTKNEAEKSRQIKSNGIL), 667–687 (AASEKDPRSEISGKSQSSGFH), and 714–795 (FEKN…SVQR). Composition is skewed to polar residues over residues 678–687 (SGKSQSSGFH) and 720–732 (KSSGFSKPLSTER).

This sequence belongs to the JADE family. As to quaternary structure, component of the HBO1 complex.

Scaffold subunit of some HBO1 complexes, which have a histone H4 acetyltransferase activity. The polypeptide is Protein Jade-3 (jade3) (Danio rerio (Zebrafish)).